The primary structure comprises 165 residues: Shikimate kinase (165 aa).

ATP is bound at residue 12-17 (GCGKST). Ser16 contributes to the Mg(2+) binding site. Substrate is bound by residues Asp34, Arg57, and Gly79. Arg116 serves as a coordination point for ATP. Arg133 is a binding site for substrate.

This sequence belongs to the shikimate kinase family. In terms of assembly, monomer. Mg(2+) is required as a cofactor.

The protein localises to the cytoplasm. It catalyses the reaction shikimate + ATP = 3-phosphoshikimate + ADP + H(+). It participates in metabolic intermediate biosynthesis; chorismate biosynthesis; chorismate from D-erythrose 4-phosphate and phosphoenolpyruvate: step 5/7. Its function is as follows. Catalyzes the specific phosphorylation of the 3-hydroxyl group of shikimic acid using ATP as a cosubstrate. The sequence is that of Shikimate kinase from Clostridium botulinum (strain Alaska E43 / Type E3).